We begin with the raw amino-acid sequence, 183 residues long: MNFKIYETKIREEFELVLKWMHNEFIKLRTGRATPAILDGILVNYYGSMMPINQLANISVPEPRVLAIKPYDRSSIKDIATAINASNLGVNPQVDVDIIRLTFAAPTEEVRKNLVKKAKQVGEEAKIRVRHIRQEAQDLFKKDSTTIEDDKKFFQTELDNLTKELNKEIETVVSHKEKDIMTV.

This sequence belongs to the RRF family.

The protein resides in the cytoplasm. Functionally, responsible for the release of ribosomes from messenger RNA at the termination of protein biosynthesis. May increase the efficiency of translation by recycling ribosomes from one round of translation to another. This Ureaplasma parvum serovar 3 (strain ATCC 27815 / 27 / NCTC 11736) protein is Ribosome-recycling factor.